Here is a 90-residue protein sequence, read N- to C-terminus: Cell division topological specificity factor (90 aa).

It belongs to the MinE family.

Prevents the cell division inhibition by proteins MinC and MinD at internal division sites while permitting inhibition at polar sites. This ensures cell division at the proper site by restricting the formation of a division septum at the midpoint of the long axis of the cell. This is Cell division topological specificity factor from Bordetella avium (strain 197N).